The chain runs to 378 residues: Mannitol-1-phosphate 5-dehydrogenase (378 aa).

4–15 (SVHFGAGNIGRG) lines the NAD(+) pocket.

Belongs to the mannitol dehydrogenase family.

It catalyses the reaction D-mannitol 1-phosphate + NAD(+) = beta-D-fructose 6-phosphate + NADH + H(+). The chain is Mannitol-1-phosphate 5-dehydrogenase from Streptococcus pneumoniae (strain JJA).